A 195-amino-acid chain; its full sequence is Nuclear transcription factor Y subunit C-10 (195 aa).

Positions 1 to 24 are disordered; it reads MRRPKSSHVRMEPVAPRSHNTMPM.

It belongs to the NFYC/HAP5 subunit family. In terms of assembly, heterotrimeric transcription factor composed of three components, NF-YA, NF-YB and NF-YC. NF-YB and NF-YC must interact and dimerize for NF-YA association and DNA binding.

It is found in the nucleus. Functionally, stimulates the transcription of various genes by recognizing and binding to a CCAAT motif in promoters. In Arabidopsis thaliana (Mouse-ear cress), this protein is Nuclear transcription factor Y subunit C-10 (NFYC10).